We begin with the raw amino-acid sequence, 587 residues long: Arginine--tRNA ligase (587 aa).

The 'HIGH' region signature appears at 123-133 (ANVAKPLHVGH).

This sequence belongs to the class-I aminoacyl-tRNA synthetase family. In terms of assembly, monomer.

The protein resides in the cytoplasm. It catalyses the reaction tRNA(Arg) + L-arginine + ATP = L-arginyl-tRNA(Arg) + AMP + diphosphate. This is Arginine--tRNA ligase from Alkaliphilus oremlandii (strain OhILAs) (Clostridium oremlandii (strain OhILAs)).